A 285-amino-acid polypeptide reads, in one-letter code: Ribonuclease H1 (285 aa).

The segment at 72 to 122 is disordered; sequence RSSSSPDGSKGQESAHVQKLQVKTSKRPREPLGEEEEPPEPGAKHTRQDTE. One can recognise an RNase H type-1 domain in the interval 135-281; it reads MGESVVVYTD…ADRLAREGAK (147 aa). Mg(2+) is bound by residues Asp144, Glu185, Asp209, and Asp273.

It belongs to the RNase H family. In terms of assembly, monomer. The cofactor is Mg(2+).

The protein resides in the cytoplasm. The catalysed reaction is Endonucleolytic cleavage to 5'-phosphomonoester.. Its activity is regulated as follows. In the presence of magnesium, manganese is inhibitory. In terms of biological role, endonuclease that specifically degrades the RNA of RNA-DNA hybrids. Plays a role in RNA polymerase II (RNAp II) transcription termination by degrading R-loop RNA-DNA hybrid formation at G-rich pause sites located downstream of the poly(A) site and behind the elongating RNAp II. This is Ribonuclease H1 (Rnaseh1) from Rattus norvegicus (Rat).